The chain runs to 92 residues: Small ribosomal subunit protein uS19 (92 aa).

Belongs to the universal ribosomal protein uS19 family.

Its function is as follows. Protein S19 forms a complex with S13 that binds strongly to the 16S ribosomal RNA. This chain is Small ribosomal subunit protein uS19, found in Lactococcus lactis subsp. lactis (strain IL1403) (Streptococcus lactis).